The sequence spans 414 residues: Snake venom metalloproteinase (414 aa).

The first 20 residues, 1 to 20, serve as a signal peptide directing secretion; the sequence is MIEVLLVTICLAVFPYQGSS. Positions 21 to 190 are excised as a propeptide; it reads IILESGNVND…KASDLNFNSD (170 aa). Q191 is modified (pyrrolidone carboxylic acid). Residues 197 to 393 enclose the Peptidase M12B domain; it reads RYVELVIVAD…YKPQCILNKP (197 aa). E200 and D284 together coordinate Ca(2+). 2 disulfide bridges follow: C308-C388 and C348-C355. H333 is a binding site for Zn(2+). Residue E334 is part of the active site. Residues H337 and H343 each coordinate Zn(2+). Residues C388 and N391 each coordinate Ca(2+). Positions 394-414 are excised as a propeptide; that stretch reads LRIDPVSTPVSGNELLEAGEE.

Belongs to the venom metalloproteinase (M12B) family. P-I subfamily. Monomer. Zn(2+) serves as cofactor. Expressed by the venom gland.

Its subcellular location is the secreted. Functionally, snake venom metalloproteinase that impairs hemostasis in the envenomed animal. This Crotalus molossus molossus (Northern black-tailed rattlesnake) protein is Snake venom metalloproteinase.